Here is a 310-residue protein sequence, read N- to C-terminus: Putative S-adenosyl-L-methionine-dependent methyltransferase MUL_4762 (310 aa).

S-adenosyl-L-methionine-binding positions include aspartate 132 and 161 to 162 (DL).

Belongs to the UPF0677 family.

In terms of biological role, exhibits S-adenosyl-L-methionine-dependent methyltransferase activity. This Mycobacterium ulcerans (strain Agy99) protein is Putative S-adenosyl-L-methionine-dependent methyltransferase MUL_4762.